Consider the following 265-residue polypeptide: Undecaprenyl-diphosphatase (265 aa).

8 helical membrane-spanning segments follow: residues 1 to 21 (MDFL…FLPI), 39 to 59 (QGVG…ILYF), 87 to 107 (WAVV…LDYI), 110 to 130 (ALRA…LLAA), 144 to 164 (IGFK…IPGT), 187 to 207 (FSFF…LLTI), 217 to 237 (LGFL…IHFF), and 244 to 264 (FGMW…YLLF).

This sequence belongs to the UppP family.

Its subcellular location is the cell inner membrane. The enzyme catalyses di-trans,octa-cis-undecaprenyl diphosphate + H2O = di-trans,octa-cis-undecaprenyl phosphate + phosphate + H(+). Its function is as follows. Catalyzes the dephosphorylation of undecaprenyl diphosphate (UPP). Confers resistance to bacitracin. This chain is Undecaprenyl-diphosphatase, found in Idiomarina loihiensis (strain ATCC BAA-735 / DSM 15497 / L2-TR).